Here is a 305-residue protein sequence, read N- to C-terminus: UDP-3-O-acyl-N-acetylglucosamine deacetylase (305 aa).

Residues histidine 79, histidine 238, and aspartate 242 each contribute to the Zn(2+) site. The Proton donor role is filled by histidine 265.

This sequence belongs to the LpxC family. Zn(2+) serves as cofactor.

The enzyme catalyses a UDP-3-O-[(3R)-3-hydroxyacyl]-N-acetyl-alpha-D-glucosamine + H2O = a UDP-3-O-[(3R)-3-hydroxyacyl]-alpha-D-glucosamine + acetate. Its pathway is glycolipid biosynthesis; lipid IV(A) biosynthesis; lipid IV(A) from (3R)-3-hydroxytetradecanoyl-[acyl-carrier-protein] and UDP-N-acetyl-alpha-D-glucosamine: step 2/6. Its function is as follows. Catalyzes the hydrolysis of UDP-3-O-myristoyl-N-acetylglucosamine to form UDP-3-O-myristoylglucosamine and acetate, the committed step in lipid A biosynthesis. This chain is UDP-3-O-acyl-N-acetylglucosamine deacetylase, found in Erwinia tasmaniensis (strain DSM 17950 / CFBP 7177 / CIP 109463 / NCPPB 4357 / Et1/99).